Here is a 209-residue protein sequence, read N- to C-terminus: Octanoyltransferase (209 aa).

The 180-residue stretch at 30-209 (DNEPEIVYLV…IQTEFNKIFK (180 aa)) folds into the BPL/LPL catalytic domain. Substrate-binding positions include 69-76 (RGGKFTFH), 143-145 (AIG), and 156-158 (GIA). Cysteine 174 functions as the Acyl-thioester intermediate in the catalytic mechanism.

This sequence belongs to the LipB family.

The protein localises to the cytoplasm. It catalyses the reaction octanoyl-[ACP] + L-lysyl-[protein] = N(6)-octanoyl-L-lysyl-[protein] + holo-[ACP] + H(+). It functions in the pathway protein modification; protein lipoylation via endogenous pathway; protein N(6)-(lipoyl)lysine from octanoyl-[acyl-carrier-protein]: step 1/2. In terms of biological role, catalyzes the transfer of endogenously produced octanoic acid from octanoyl-acyl-carrier-protein onto the lipoyl domains of lipoate-dependent enzymes. Lipoyl-ACP can also act as a substrate although octanoyl-ACP is likely to be the physiological substrate. The sequence is that of Octanoyltransferase from Rickettsia prowazekii (strain Madrid E).